A 264-amino-acid chain; its full sequence is Triosephosphate isomerase (264 aa).

Position 13–15 (13–15 (NWK)) interacts with substrate. The active-site Electrophile is His106. Glu179 acts as the Proton acceptor in catalysis. Substrate contacts are provided by residues Gly185, Ser223, and 244–245 (GG).

Belongs to the triosephosphate isomerase family. As to quaternary structure, homodimer.

The protein resides in the cytoplasm. It carries out the reaction D-glyceraldehyde 3-phosphate = dihydroxyacetone phosphate. Its pathway is carbohydrate biosynthesis; gluconeogenesis. It functions in the pathway carbohydrate degradation; glycolysis; D-glyceraldehyde 3-phosphate from glycerone phosphate: step 1/1. Involved in the gluconeogenesis. Catalyzes stereospecifically the conversion of dihydroxyacetone phosphate (DHAP) to D-glyceraldehyde-3-phosphate (G3P). The polypeptide is Triosephosphate isomerase (Acinetobacter baumannii (strain AB0057)).